The chain runs to 537 residues: ATP synthase subunit alpha (537 aa).

174-181 lines the ATP pocket; sequence GDRQTGKT.

It belongs to the ATPase alpha/beta chains family. F-type ATPases have 2 components, CF(1) - the catalytic core - and CF(0) - the membrane proton channel. CF(1) has five subunits: alpha(3), beta(3), gamma(1), delta(1), epsilon(1). CF(0) has three main subunits: a(1), b(2) and c(9-12). The alpha and beta chains form an alternating ring which encloses part of the gamma chain. CF(1) is attached to CF(0) by a central stalk formed by the gamma and epsilon chains, while a peripheral stalk is formed by the delta and b chains.

It localises to the cell inner membrane. The catalysed reaction is ATP + H2O + 4 H(+)(in) = ADP + phosphate + 5 H(+)(out). In terms of biological role, produces ATP from ADP in the presence of a proton gradient across the membrane. The alpha chain is a regulatory subunit. This chain is ATP synthase subunit alpha, found in Verminephrobacter eiseniae (strain EF01-2).